We begin with the raw amino-acid sequence, 312 residues long: tRNA dimethylallyltransferase (312 aa).

10–17 (GPTGVGKT) provides a ligand contact to ATP. A substrate-binding site is contributed by 12 to 17 (TGVGKT).

The protein belongs to the IPP transferase family. In terms of assembly, monomer. Mg(2+) is required as a cofactor.

The catalysed reaction is adenosine(37) in tRNA + dimethylallyl diphosphate = N(6)-dimethylallyladenosine(37) in tRNA + diphosphate. Its function is as follows. Catalyzes the transfer of a dimethylallyl group onto the adenine at position 37 in tRNAs that read codons beginning with uridine, leading to the formation of N6-(dimethylallyl)adenosine (i(6)A). In Coprothermobacter proteolyticus (strain ATCC 35245 / DSM 5265 / OCM 4 / BT), this protein is tRNA dimethylallyltransferase.